The primary structure comprises 350 residues: Galactokinase (350 aa).

14–17 (EHTD) lines the substrate pocket. Residues S46 and 96–102 (GAGLSSS) each bind ATP. Mg(2+) contacts are provided by S102 and E134. D146 functions as the Proton acceptor in the catalytic mechanism. Y196 lines the substrate pocket.

This sequence belongs to the GHMP kinase family. GalK subfamily.

The protein resides in the cytoplasm. The catalysed reaction is alpha-D-galactose + ATP = alpha-D-galactose 1-phosphate + ADP + H(+). It participates in carbohydrate metabolism; galactose metabolism. Its function is as follows. Catalyzes the transfer of the gamma-phosphate of ATP to D-galactose to form alpha-D-galactose-1-phosphate (Gal-1-P). The polypeptide is Galactokinase (Thermotoga neapolitana).